Here is a 582-residue protein sequence, read N- to C-terminus: Hydrazine dehydrogenase (582 aa).

The first 32 residues, 1 to 32 (MRKFLKVTLASALIGCGVIGTVSSLMVKEAKA), serve as a signal peptide directing secretion. 32 residues coordinate heme c: Cys121, Cys124, His125, His141, Cys151, Cys154, His155, His159, Cys170, Cys175, His176, His191, Cys216, Cys219, His220, Cys227, Cys230, His231, His234, Cys247, Cys250, His251, His267, Cys297, Cys300, His301, His306, Cys342, Cys345, His346, His454, and Tyr462. The interval 561-582 (GSHSAHHHESGHDPAARSMKEH) is disordered. The segment covering 567–582 (HHESGHDPAARSMKEH) has biased composition (basic and acidic residues).

As to quaternary structure, homotrimer; subunits are linked by two covalent bonds between Tyr-462 of one subunit and heme P460 of an adjacent subunit. May form 24-mer of an octamer of trimers. Heme c is required as a cofactor.

Its subcellular location is the anammoxosome. It carries out the reaction hydrazine + 4 Fe(III)-[cytochrome c] = N2 + 4 Fe(II)-[cytochrome c] + 4 H(+). Its pathway is nitrogen metabolism. Its activity is regulated as follows. Is strongly and competitively inhibited by NO and hydroxylamine. Catalyzes the four-electron oxidation of hydrazine to N2. The electrons derived from hydrazine oxidation may be transferred to the quinone pool and exploited to promote the generation of proton-motive force (pmf) across the anammoxosome membrane. Is involved in anaerobic ammonium oxidation (anammox), a biological process in which nitrite is used as the electron acceptor in the conversion of ammonium to dinitrogen gas (N2) and water; this bacterial process has a major role in the Earth's nitrogen cycle and has been estimated to synthesize up to 50% of the dinitrogen gas emitted into our atmosphere from the oceans. Cannot oxidize hydroxylamine to NO. The chain is Hydrazine dehydrogenase from Kuenenia stuttgartiensis.